Reading from the N-terminus, the 1298-residue chain is Phosphoribosylformylglycinamidine synthase (1298 aa).

The interval Phe303 to Lys327 is disordered. Residues Gly305 to Asp316, Thr384 to Tyr386, and Ala676 contribute to the ATP site. Mg(2+) is bound by residues Asp677, Glu716, Asn720, and Asp884. Ser886 lines the ATP pocket. Positions Val1045 to Asn1298 constitute a Glutamine amidotransferase type-1 domain. Cys1138 acts as the Nucleophile in catalysis. Active-site residues include His1263 and Glu1265.

In the N-terminal section; belongs to the FGAMS family. As to quaternary structure, monomer.

The protein resides in the cytoplasm. It carries out the reaction N(2)-formyl-N(1)-(5-phospho-beta-D-ribosyl)glycinamide + L-glutamine + ATP + H2O = 2-formamido-N(1)-(5-O-phospho-beta-D-ribosyl)acetamidine + L-glutamate + ADP + phosphate + H(+). It participates in purine metabolism; IMP biosynthesis via de novo pathway; 5-amino-1-(5-phospho-D-ribosyl)imidazole from N(2)-formyl-N(1)-(5-phospho-D-ribosyl)glycinamide: step 1/2. Phosphoribosylformylglycinamidine synthase involved in the purines biosynthetic pathway. Catalyzes the ATP-dependent conversion of formylglycinamide ribonucleotide (FGAR) and glutamine to yield formylglycinamidine ribonucleotide (FGAM) and glutamate. The polypeptide is Phosphoribosylformylglycinamidine synthase (Pseudomonas savastanoi pv. phaseolicola (strain 1448A / Race 6) (Pseudomonas syringae pv. phaseolicola (strain 1448A / Race 6))).